Here is a 650-residue protein sequence, read N- to C-terminus: Chaperone protein DnaK (650 aa).

Thr-200 bears the Phosphothreonine; by autocatalysis mark. Low complexity predominate over residues 612 to 632; the sequence is GEGATAGAAAGAGAAGGQQAQ. The interval 612–650 is disordered; that stretch reads GEGATAGAAAGAGAAGGQQAQPQDDNVVDAEFKEVNDKK. Residues 641-650 are compositionally biased toward basic and acidic residues; sequence AEFKEVNDKK.

It belongs to the heat shock protein 70 family.

In terms of biological role, acts as a chaperone. This chain is Chaperone protein DnaK, found in Cupriavidus necator (strain ATCC 17699 / DSM 428 / KCTC 22496 / NCIMB 10442 / H16 / Stanier 337) (Ralstonia eutropha).